A 137-amino-acid chain; its full sequence is CUB domain-containing protein (137 aa).

An N-terminal signal peptide occupies residues 1 to 21; it reads MRLSRAFAWPLLCSIATTVKA. Intrachain disulfides connect C30–C51 and C75–C96. The region spanning 30–132 is the CUB domain; the sequence is CGGHYTDEYG…TFFEIYYFVD (103 aa).

The protein is CUB domain-containing protein of Homo sapiens (Human).